A 268-amino-acid chain; its full sequence is Tryptophan synthase alpha chain (268 aa).

Residues Glu49 and Asp60 each act as proton acceptor in the active site.

This sequence belongs to the TrpA family. As to quaternary structure, tetramer of two alpha and two beta chains.

It carries out the reaction (1S,2R)-1-C-(indol-3-yl)glycerol 3-phosphate + L-serine = D-glyceraldehyde 3-phosphate + L-tryptophan + H2O. Its pathway is amino-acid biosynthesis; L-tryptophan biosynthesis; L-tryptophan from chorismate: step 5/5. The alpha subunit is responsible for the aldol cleavage of indoleglycerol phosphate to indole and glyceraldehyde 3-phosphate. This chain is Tryptophan synthase alpha chain, found in Photorhabdus laumondii subsp. laumondii (strain DSM 15139 / CIP 105565 / TT01) (Photorhabdus luminescens subsp. laumondii).